The following is a 412-amino-acid chain: Poly-beta-1,6-N-acetyl-D-glucosamine synthase (412 aa).

Helical transmembrane passes span 6–26 (FLLFYPVFMSIYWIVGSIYFY), 298–318 (IISILWVYIVLLYLGYLFITA), 332–352 (IFLLSSFTMTFINVIQFTVAL), and 366–386 (LIFVSWYPTVYWIINAAVVLV).

It belongs to the glycosyltransferase 2 family.

It is found in the cell membrane. Functionally, N-acetylglucosaminyltransferase that catalyzes the polymerization of single monomer units of UDP-N-acetylglucosamine to produce the linear homomer poly-beta-1,6-N-acetyl-D-glucosamine (PNAG, also referred to as PIA), a biofilm adhesin polysaccharide. Requires IcaD for full activity. The sequence is that of Poly-beta-1,6-N-acetyl-D-glucosamine synthase (icaA) from Staphylococcus aureus (strain NCTC 8325 / PS 47).